The chain runs to 277 residues: Probable ABC transporter permease protein y4oR (277 aa).

Helical transmembrane passes span 15-35 (LWTLFWCVLAFVYLFPYTWMV), 79-99 (VVTIVSVVLVIAVSAPAAYAL), 109-129 (LLVAILVARIIPGIAIGVPVY), 140-160 (TYQALIIINVAVNIPFAIWLM), 189-209 (IMMPLVLGGMLATAVFVFIAV), 213-233 (FLFALILTTSVSPTAPLAMLG), and 242-262 (WDAVGAAAFLVSTPVIAFAFI). Residues 74–263 (IINSAVVTIV…TPVIAFAFIM (190 aa)) form the ABC transmembrane type-1 domain.

Belongs to the binding-protein-dependent transport system permease family. MalFG subfamily.

The protein resides in the cell inner membrane. In terms of biological role, probably part of the binding-protein-dependent transport system y4oPQRS. This system probably transports a sugar-like molecule. Probably responsible for the translocation of the substrate across the membrane. The protein is Probable ABC transporter permease protein y4oR of Sinorhizobium fredii (strain NBRC 101917 / NGR234).